The following is a 243-amino-acid chain: MSDWLFDLGNSRFKFAPLQGDRAGDVQAWAHGAEGMAGQPPHSLPSGTTAFVASVAAPSLTSAMLDQLQRRFEHVHVVRTSAECAGVRIAYAKPEKFGVDRFLALLAAAKAQRPVLVVGVGTALTIDLLDANGQHHGGRISASPTTMREALHARAVQLPATGGDYSEFANDTADALASGCDGAAVALIERSAQQAHALLGVAPSLLVHGGGAPALMPLLPGADYHPSLVLDGLARWAVHQPAG.

7–14 (DLGNSRFK) is a binding site for ATP. Residues Y91 and 98-101 (GVDR) each bind substrate. The active-site Proton acceptor is D100. Residue T122 participates in ATP binding. T172 serves as a coordination point for substrate.

The protein belongs to the type III pantothenate kinase family. Homodimer. Requires NH4(+) as cofactor. The cofactor is K(+).

Its subcellular location is the cytoplasm. It carries out the reaction (R)-pantothenate + ATP = (R)-4'-phosphopantothenate + ADP + H(+). The protein operates within cofactor biosynthesis; coenzyme A biosynthesis; CoA from (R)-pantothenate: step 1/5. Functionally, catalyzes the phosphorylation of pantothenate (Pan), the first step in CoA biosynthesis. In Stenotrophomonas maltophilia (strain R551-3), this protein is Type III pantothenate kinase.